A 94-amino-acid chain; its full sequence is MINVRVINKKRRIQKYKVSVKSGDTIKVISGKYKNIVAKVLRVLKYSNEIIVKGVNIKIKHIKPVRDNEMGSLKSLEFPINISKVVLLESRKKE.

The protein belongs to the universal ribosomal protein uL24 family. As to quaternary structure, part of the 50S ribosomal subunit.

It is found in the plastid. It localises to the chloroplast. Its function is as follows. One of two assembly initiator proteins, it binds directly to the 5'-end of the 23S rRNA, where it nucleates assembly of the 50S subunit. This chain is Large ribosomal subunit protein uL24c (rpl24), found in Cyanidium caldarium (Red alga).